The sequence spans 197 residues: Phosphoheptose isomerase (197 aa).

The 162-residue stretch at 36 to 197 folds into the SIS domain; that stretch reads MVNALLNEGK…IDSQLFGSEE (162 aa). A substrate-binding site is contributed by 51 to 53; sequence NGG. Zn(2+)-binding residues include His60 and Glu64. Residues Glu64, 93–94, 119–121, Ser124, and Gln174 each bind substrate; these read ND and STS. The Zn(2+) site is built by Gln174 and His182.

The protein belongs to the SIS family. GmhA subfamily. As to quaternary structure, homotetramer. Zn(2+) serves as cofactor.

It localises to the cytoplasm. It catalyses the reaction 2 D-sedoheptulose 7-phosphate = D-glycero-alpha-D-manno-heptose 7-phosphate + D-glycero-beta-D-manno-heptose 7-phosphate. Its pathway is carbohydrate biosynthesis; D-glycero-D-manno-heptose 7-phosphate biosynthesis; D-glycero-alpha-D-manno-heptose 7-phosphate and D-glycero-beta-D-manno-heptose 7-phosphate from sedoheptulose 7-phosphate: step 1/1. Functionally, catalyzes the isomerization of sedoheptulose 7-phosphate in D-glycero-D-manno-heptose 7-phosphate. The protein is Phosphoheptose isomerase of Pseudomonas syringae pv. syringae (strain B728a).